We begin with the raw amino-acid sequence, 148 residues long: 2S seed storage protein 1 (148 aa).

Positions 1-19 (MARFTIVLAVLFAAALVSA) are cleaved as a signal peptide. Positions 20–38 (SAHKTVVTTSVAEEGEEEN) are excised as a propeptide. The tract at residues 24-94 (TVVTTSVAEE…ECCNELRDVK (71 aa)) is involved in IgE-binding. 4 cysteine pairs are disulfide-bonded: Cys42/Cys97, Cys54/Cys86, Cys87/Cys133, and Cys99/Cys141. Immunodominant epitope; binds to IgE of 14 patients out of 15 tested regions lie at residues 46–55 (SRQCQMRHCM), 48–57 (QCQMRHCMQW), and 76–86 (NQGQFEHFREC). A propeptide spanning residues 69 to 76 (FLRSAEAN) is cleaved from the precursor. Residues 147 to 148 (FA) constitute a propeptide that is removed on maturation.

The protein belongs to the 2S seed storage albumins family. As to quaternary structure, the mature protein consists of a small and a large chain linked by disulfide bonds. In terms of tissue distribution, expressed in seeds (at protein level).

Seed storage protein. This Sesamum indicum (Oriental sesame) protein is 2S seed storage protein 1.